The chain runs to 88 residues: FXYD domain-containing ion transport regulator 4 (88 aa).

An N-terminal signal peptide occupies residues Met-1–Ala-20. The Extracellular portion of the chain corresponds to Ser-21 to Gln-38. Residues Leu-39–Gly-59 traverse the membrane as a helical segment. The Cytoplasmic portion of the chain corresponds to Lys-60–Cys-88.

The protein belongs to the FXYD family. In terms of assembly, regulatory subunit of the sodium/potassium-transporting ATPase which is composed of a catalytic alpha subunit, a non-catalytic beta subunit and a regulatory subunit. The regulatory subunit, a member of the FXYD protein family, modulates the enzymatic activity in a tissue- and isoform-specific way by changing affinities of the Na+/K+-ATPase toward Na(+), K(+) or ATP.

The protein resides in the cell membrane. The protein localises to the basolateral cell membrane. Associates with and regulates the activity of the sodium/potassium-transporting ATPase (NKA) which catalyzes the hydrolysis of ATP coupled with the exchange of Na(+) and K(+) ions across the plasma membrane. Increases the apparent affinity of the transporter for Na(+) and increases NKA activity. This chain is FXYD domain-containing ion transport regulator 4 (Fxyd4), found in Mus musculus (Mouse).